The chain runs to 89 residues: Small ribosomal subunit protein uS15 (89 aa).

This sequence belongs to the universal ribosomal protein uS15 family. In terms of assembly, part of the 30S ribosomal subunit. Forms a bridge to the 50S subunit in the 70S ribosome, contacting the 23S rRNA.

Its function is as follows. One of the primary rRNA binding proteins, it binds directly to 16S rRNA where it helps nucleate assembly of the platform of the 30S subunit by binding and bridging several RNA helices of the 16S rRNA. Functionally, forms an intersubunit bridge (bridge B4) with the 23S rRNA of the 50S subunit in the ribosome. This is Small ribosomal subunit protein uS15 from Renibacterium salmoninarum (strain ATCC 33209 / DSM 20767 / JCM 11484 / NBRC 15589 / NCIMB 2235).